Reading from the N-terminus, the 495-residue chain is Aspartyl/glutamyl-tRNA(Asn/Gln) amidotransferase subunit B (495 aa).

This sequence belongs to the GatB/GatE family. GatB subfamily. As to quaternary structure, heterotrimer of A, B and C subunits.

The catalysed reaction is L-glutamyl-tRNA(Gln) + L-glutamine + ATP + H2O = L-glutaminyl-tRNA(Gln) + L-glutamate + ADP + phosphate + H(+). It catalyses the reaction L-aspartyl-tRNA(Asn) + L-glutamine + ATP + H2O = L-asparaginyl-tRNA(Asn) + L-glutamate + ADP + phosphate + 2 H(+). In terms of biological role, allows the formation of correctly charged Asn-tRNA(Asn) or Gln-tRNA(Gln) through the transamidation of misacylated Asp-tRNA(Asn) or Glu-tRNA(Gln) in organisms which lack either or both of asparaginyl-tRNA or glutaminyl-tRNA synthetases. The reaction takes place in the presence of glutamine and ATP through an activated phospho-Asp-tRNA(Asn) or phospho-Glu-tRNA(Gln). This chain is Aspartyl/glutamyl-tRNA(Asn/Gln) amidotransferase subunit B, found in Rippkaea orientalis (strain PCC 8801 / RF-1) (Cyanothece sp. (strain PCC 8801)).